The following is a 194-amino-acid chain: Probable RNA 2'-phosphotransferase (194 aa).

Belongs to the KptA/TPT1 family.

Its function is as follows. Removes the 2'-phosphate from RNA via an intermediate in which the phosphate is ADP-ribosylated by NAD followed by a presumed transesterification to release the RNA and generate ADP-ribose 1''-2''-cyclic phosphate (APPR&gt;P). May function as an ADP-ribosylase. The protein is Probable RNA 2'-phosphotransferase of Burkholderia lata (strain ATCC 17760 / DSM 23089 / LMG 22485 / NCIMB 9086 / R18194 / 383).